Here is a 299-residue protein sequence, read N- to C-terminus: Non-homologous end-joining factor 1 (299 aa).

Residues 1–135 (MEELEQGLLM…ASPSLVSQHL (135 aa)) are globular head. Positions 128-170 (PSLVSQHLIRPLMGMSLALQCQVRELATLLHMKDLEIQDYQES) form a coiled coil. Phosphoserine; by PRKDC is present on residues Ser-132, Ser-203, Ser-245, and Ser-251. The interval 224–288 (QEVQVGQKHQ…GPLQRPQLSK (65 aa)) is C-terminal tail. The segment covering 255–266 (NQPEQLVSSAPT) has biased composition (polar residues). The segment at 255–299 (NQPEQLVSSAPTLSAPEKESTGTSGPLQRPQLSKVKRKKPRGLFS) is disordered. Residue Ser-263 is modified to Phosphoserine. Thr-266 is subject to Phosphothreonine. Phosphoserine is present on Ser-287. Basic residues predominate over residues 288–299 (KVKRKKPRGLFS). Positions 289-299 (VKRKKPRGLFS) match the XLM motif.

It belongs to the XRCC4-XLF family. XLF subfamily. In terms of assembly, homodimer; mainly exists as a homodimer when not associated with XRCC4. Interacts with XRCC4; the interaction is direct and is mediated via a head-to-head interaction between N-terminal head regions. Component of the core long-range non-homologous end joining (NHEJ) complex (also named DNA-PK complex) composed of PRKDC, LIG4, XRCC4, XRCC6/Ku70, XRCC5/Ku86 and NHEJ1/XLF. Additional component of the NHEJ complex includes PAXX. Following autophosphorylation, PRKDC dissociates from DNA, leading to formation of the short-range NHEJ complex, composed of LIG4, XRCC4, XRCC6/Ku70, XRCC5/Ku86 and NHEJ1/XLF. Interacts with POLL (DNA polymerase lambda); promoting POLL recruitment to double-strand breaks (DSBs) and stimulation of the end-filling activity of POLL. In terms of processing, phosphorylated by PRKDC at the C-terminus in response to DNA damage. Phosphorylations by PRKDC at the C-terminus of XRCC4 and NHEJ1/XLF are highly redundant and regulate ability of the XRCC4-NHEJ1/XLF subcomplex to bridge DNA. Phosphorylation does not prevent interaction with XRCC4 but disrupts ability to bridge DNA and promotes detachment from DNA. In terms of tissue distribution, ubiquitously expressed.

Its subcellular location is the nucleus. It is found in the chromosome. In terms of biological role, DNA repair protein involved in DNA non-homologous end joining (NHEJ); it is required for double-strand break (DSB) repair and V(D)J recombination and is also involved in telomere maintenance. Plays a key role in NHEJ by promoting the ligation of various mismatched and non-cohesive ends. Together with PAXX, collaborates with DNA polymerase lambda (POLL) to promote joining of non-cohesive DNA ends. May act in concert with XRCC5-XRCC6 (Ku) to stimulate XRCC4-mediated joining of blunt ends and several types of mismatched ends that are non-complementary or partially complementary. In some studies, has been shown to associate with XRCC4 to form alternating helical filaments that bridge DNA and act like a bandage, holding together the broken DNA until it is repaired. Alternatively, it has also been shown that rather than forming filaments, a single NHEJ1 dimer interacts through both head domains with XRCC4 to promote the close alignment of DNA ends. The XRCC4-NHEJ1/XLF subcomplex binds to the DNA fragments of a DSB in a highly diffusive manner and robustly bridges two independent DNA molecules, holding the broken DNA fragments in close proximity to one other. The mobility of the bridges ensures that the ends remain accessible for further processing by other repair factors. Binds DNA in a length-dependent manner. The chain is Non-homologous end-joining factor 1 from Homo sapiens (Human).